A 616-amino-acid polypeptide reads, in one-letter code: Chaperone protein HscA (616 aa).

Belongs to the heat shock protein 70 family.

Functionally, chaperone involved in the maturation of iron-sulfur cluster-containing proteins. Has a low intrinsic ATPase activity which is markedly stimulated by HscB. Involved in the maturation of IscU. This is Chaperone protein HscA from Salmonella typhimurium (strain LT2 / SGSC1412 / ATCC 700720).